Consider the following 550-residue polypeptide: NAD(P)H-quinone oxidoreductase chain 4 3 (550 aa).

A run of 14 helical transmembrane segments spans residues 5 to 25 (FPWL…IPLL), 36 to 56 (YALI…WQHF), 86 to 106 (ISAP…FSAW), 114 to 134 (LFYA…VAKD), 135 to 155 (LFLF…LVCI), 168 to 188 (FLLY…ALSL), 212 to 232 (MWLY…FPLH), 243 to 263 (SSPV…YGLM), 277 to 297 (FAPL…FSSF), 311 to 331 (VSHM…GING), 332 to 352 (AMLQ…LAGV), 375 to 395 (VFAM…MSGF), 418 to 438 (ITVF…LSML), and 489 to 509 (IFIA…PKLL).

This sequence belongs to the complex I subunit 4 family.

It is found in the cellular thylakoid membrane. The catalysed reaction is a plastoquinone + NADH + (n+1) H(+)(in) = a plastoquinol + NAD(+) + n H(+)(out). It catalyses the reaction a plastoquinone + NADPH + (n+1) H(+)(in) = a plastoquinol + NADP(+) + n H(+)(out). Functionally, NDH-1 shuttles electrons from NAD(P)H, via FMN and iron-sulfur (Fe-S) centers, to quinones in the respiratory chain. The immediate electron acceptor for the enzyme in this species is believed to be plastoquinone. Couples the redox reaction to proton translocation (for every two electrons transferred, four hydrogen ions are translocated across the cytoplasmic membrane), and thus conserves the redox energy in a proton gradient. The chain is NAD(P)H-quinone oxidoreductase chain 4 3 from Picosynechococcus sp. (strain ATCC 27264 / PCC 7002 / PR-6) (Agmenellum quadruplicatum).